Here is a 128-residue protein sequence, read N- to C-terminus: Sirohydrochlorin cobaltochelatase (128 aa).

His9 acts as the Proton acceptor in catalysis. A Co(2+)-binding site is contributed by His9. Substrate-binding positions include Lys43 and 68–73 (FATGTH). His73 is a Co(2+) binding site.

It belongs to the CbiX family. CbiXS subfamily. In terms of assembly, homotetramer; dimer of dimers.

The enzyme catalyses Co-sirohydrochlorin + 2 H(+) = sirohydrochlorin + Co(2+). It functions in the pathway cofactor biosynthesis; adenosylcobalamin biosynthesis; cob(II)yrinate a,c-diamide from sirohydrochlorin (anaerobic route): step 1/10. Its function is as follows. Catalyzes the insertion of Co(2+) into sirohydrochlorin as part of the anaerobic pathway to cobalamin biosynthesis. This chain is Sirohydrochlorin cobaltochelatase, found in Saccharolobus islandicus (strain Y.G.57.14 / Yellowstone #1) (Sulfolobus islandicus).